A 556-amino-acid chain; its full sequence is Urocanate hydratase (556 aa).

NAD(+) is bound by residues 52–53, Q130, 176–178, E196, R201, 242–243, 263–267, 273–274, and Y322; these read GG, GMG, NA, QTSAH, and YL. C410 is a catalytic residue. Residue G492 coordinates NAD(+).

This sequence belongs to the urocanase family. NAD(+) is required as a cofactor.

Its subcellular location is the cytoplasm. The enzyme catalyses 4-imidazolone-5-propanoate = trans-urocanate + H2O. Its pathway is amino-acid degradation; L-histidine degradation into L-glutamate; N-formimidoyl-L-glutamate from L-histidine: step 2/3. Catalyzes the conversion of urocanate to 4-imidazolone-5-propionate. In Shewanella piezotolerans (strain WP3 / JCM 13877), this protein is Urocanate hydratase.